Reading from the N-terminus, the 170-residue chain is Neurotensin/neuromedin N (170 aa).

Residues 1–23 form the signal peptide; it reads MMAGMKIQLVCMILLAFSSWSLC.

This sequence belongs to the neurotensin family. As to quaternary structure, interacts with NTSR1. Interacts with SORT1. Interacts with SORL1. In terms of processing, neurotensin is cleaved and degraded by Angiotensin-converting enzyme (ACE) and neprilysin (MME). In terms of tissue distribution, brain and gut.

The protein localises to the secreted. The protein resides in the cytoplasmic vesicle. It is found in the secretory vesicle. Neurotensin may play an endocrine or paracrine role in the regulation of fat metabolism. It causes contraction of smooth muscle. This Bos taurus (Bovine) protein is Neurotensin/neuromedin N (NTS).